The following is an 876-amino-acid chain: Leucine--tRNA ligase (876 aa).

Residues 43–53 (PYPSGRIHMGH) carry the 'HIGH' region motif. The short motif at 632–636 (KMSKS) is the 'KMSKS' region element. Residue K635 participates in ATP binding.

Belongs to the class-I aminoacyl-tRNA synthetase family.

The protein resides in the cytoplasm. The catalysed reaction is tRNA(Leu) + L-leucine + ATP = L-leucyl-tRNA(Leu) + AMP + diphosphate. This chain is Leucine--tRNA ligase, found in Sinorhizobium medicae (strain WSM419) (Ensifer medicae).